The sequence spans 658 residues: CXXC-type zinc finger protein 1 (658 aa).

Met-1 is modified (N-acetylmethionine). Acidic residues predominate over residues 1–14 (MEGDASDPEPPDAG). The interval 1 to 20 (MEGDASDPEPPDAGEDSKSE) is disordered. Residues Ser-6 and Ser-19 each carry the phosphoserine modification. The segment at 28–76 (YCICRKPDINCFMIGCDNCNEWFHGDCIRITEKMAKAIREWYCRECREK) adopts a PHD-type zinc-finger fold. Residues 84–164 (YRHKKSRERD…HQQQQQQQQI (81 aa)) form a disordered region. A compositionally biased stretch (basic and acidic residues) spans 90-120 (RERDSSERDGSEPRDEGGGRKRPAPDPDLQR). Over residues 153–163 (QHHQQQQQQQQ) the composition is skewed to low complexity. The segment at 162–211 (QQIKRSARMCGECEACRRTEDCGHCDFCRDMKKFGGPNKIRQKCRLRQCQ) adopts a CXXC-type zinc-finger fold. Residues Cys-171, Cys-174, Cys-177, Cys-183, Cys-186, Cys-189, Cys-205, and Cys-210 each coordinate Zn(2+). Disordered stretches follow at residues 221–285 (FPSS…SDED) and 327–373 (VKVK…DPAS). Ser-226 is modified (phosphoserine). Thr-229 bears the Phosphothreonine mark. A Glycyl lysine isopeptide (Lys-Gly) (interchain with G-Cter in SUMO2) cross-link involves residue Lys-252. A compositionally biased stretch (basic residues) spans 327-336 (VKVKHVKRRE). Over residues 337-347 (KKSEKKKDERY) the composition is skewed to basic and acidic residues. A compositionally biased stretch (basic residues) spans 348-360 (KRHRQKQKHKDKW). The span at 361–370 (KHPERADAKD) shows a compositional bias: basic and acidic residues. A coiled-coil region spans residues 428–470 (GKKLLERIRREQQSARTRLQEMERRFHELEAIILRAKQQAVRE).

In terms of assembly, component of the SET1 complex, at least composed of the catalytic subunit (SETD1A or SETD1B), WDR5, WDR82, RBBP5, ASH2L/ASH2, CXXC1/CFP1, HCFC1 and DPY30. Interacts with SETD1A. Interacts with ZNF335. Interacts with PRDM9; this interaction does not link PRDM9-activated recombination hotspot sites with DSB machinery and is not required for the hotspot recognition pathway. Interacts with histone H3K4me3. In terms of processing, may be regulated by proteolysis.

The protein localises to the nucleus speckle. It localises to the nucleus. Transcriptional activator that exhibits a unique DNA binding specificity for CpG unmethylated motifs with a preference for CpGG. The sequence is that of CXXC-type zinc finger protein 1 (CXXC1) from Bos taurus (Bovine).